The primary structure comprises 260 residues: tRNA pseudouridine synthase B (260 aa).

Histidine 44 is a binding site for substrate. Catalysis depends on aspartate 49, which acts as the Nucleophile. The substrate site is built by tyrosine 77, tyrosine 180, and leucine 201.

The protein belongs to the pseudouridine synthase TruB family. Type 1 subfamily.

It carries out the reaction uridine(55) in tRNA = pseudouridine(55) in tRNA. Its function is as follows. Responsible for synthesis of pseudouridine from uracil-55 in the psi GC loop of transfer RNAs. In Blochmanniella pennsylvanica (strain BPEN), this protein is tRNA pseudouridine synthase B.